Consider the following 338-residue polypeptide: Aspartate-semialdehyde dehydrogenase (338 aa).

NADP(+) is bound by residues 13-16 (TGAV) and 41-42 (RS). A phosphate-binding site is contributed by Arg101. Cys130 (acyl-thioester intermediate) is an active-site residue. Gln157 serves as a coordination point for substrate. 160–161 (SG) serves as a coordination point for NADP(+). Residue Lys214 coordinates phosphate. Residue Arg236 participates in substrate binding. His243 serves as the catalytic Proton acceptor. Gln316 provides a ligand contact to NADP(+).

This sequence belongs to the aspartate-semialdehyde dehydrogenase family. As to quaternary structure, homodimer.

The catalysed reaction is L-aspartate 4-semialdehyde + phosphate + NADP(+) = 4-phospho-L-aspartate + NADPH + H(+). Its pathway is amino-acid biosynthesis; L-lysine biosynthesis via DAP pathway; (S)-tetrahydrodipicolinate from L-aspartate: step 2/4. It participates in amino-acid biosynthesis; L-methionine biosynthesis via de novo pathway; L-homoserine from L-aspartate: step 2/3. The protein operates within amino-acid biosynthesis; L-threonine biosynthesis; L-threonine from L-aspartate: step 2/5. Functionally, catalyzes the NADPH-dependent formation of L-aspartate-semialdehyde (L-ASA) by the reductive dephosphorylation of L-aspartyl-4-phosphate. This Synechocystis sp. (strain ATCC 27184 / PCC 6803 / Kazusa) protein is Aspartate-semialdehyde dehydrogenase (asd).